Reading from the N-terminus, the 1221-residue chain is DNA-directed RNA polymerase subunit beta' (1221 aa).

Residues Cys-60, Cys-62, Cys-75, and Cys-78 each contribute to the Zn(2+) site. Mg(2+) is bound by residues Asp-449, Asp-451, and Asp-453. 4 residues coordinate Zn(2+): Cys-820, Cys-894, Cys-901, and Cys-904.

This sequence belongs to the RNA polymerase beta' chain family. The RNAP catalytic core consists of 2 alpha, 1 beta, 1 beta' and 1 omega subunit. When a sigma factor is associated with the core the holoenzyme is formed, which can initiate transcription. It depends on Mg(2+) as a cofactor. Zn(2+) serves as cofactor.

The catalysed reaction is RNA(n) + a ribonucleoside 5'-triphosphate = RNA(n+1) + diphosphate. Functionally, DNA-dependent RNA polymerase catalyzes the transcription of DNA into RNA using the four ribonucleoside triphosphates as substrates. The polypeptide is DNA-directed RNA polymerase subunit beta' (Ligilactobacillus salivarius (strain UCC118) (Lactobacillus salivarius)).